A 558-amino-acid polypeptide reads, in one-letter code: Membrane protein insertase YidC (558 aa).

5 helical membrane passes run 6–26 (SFFI…WDDE), 359–379 (FIHT…TVII), 434–454 (LGGC…YYML), 480–500 (ILPI…PTTI), and 513–533 (LVIF…YYII).

Belongs to the OXA1/ALB3/YidC family. Type 1 subfamily. Interacts with the Sec translocase complex via SecD. Specifically interacts with transmembrane segments of nascent integral membrane proteins during membrane integration.

The protein resides in the cell inner membrane. Its function is as follows. Required for the insertion and/or proper folding and/or complex formation of integral membrane proteins into the membrane. Involved in integration of membrane proteins that insert both dependently and independently of the Sec translocase complex, as well as at least some lipoproteins. Aids folding of multispanning membrane proteins. This is Membrane protein insertase YidC from Blochmanniella floridana.